A 233-amino-acid chain; its full sequence is Uracil-DNA glycosylase (233 aa).

Catalysis depends on D70, which acts as the Proton acceptor.

The protein belongs to the uracil-DNA glycosylase (UDG) superfamily. UNG family.

The protein resides in the cytoplasm. The catalysed reaction is Hydrolyzes single-stranded DNA or mismatched double-stranded DNA and polynucleotides, releasing free uracil.. Excises uracil residues from the DNA which can arise as a result of misincorporation of dUMP residues by DNA polymerase or due to deamination of cytosine. This Helicobacter pylori (strain Shi470) protein is Uracil-DNA glycosylase.